We begin with the raw amino-acid sequence, 268 residues long: Glycine/sarcosine N-methyltransferase (268 aa).

S-adenosyl-L-methionine-binding positions include tyrosine 26, tryptophan 34, arginine 43, alanine 67, aspartate 88, 114–115 (DW), and leucine 132. Residues asparagine 134, arginine 167, and tyrosine 206 each contribute to the substrate site.

The protein belongs to the class I-like SAM-binding methyltransferase superfamily. Glycine N-methyltransferase family. Monomer.

The catalysed reaction is glycine + 2 S-adenosyl-L-methionine = N,N-dimethylglycine + 2 S-adenosyl-L-homocysteine + 2 H(+). It carries out the reaction glycine + S-adenosyl-L-methionine = sarcosine + S-adenosyl-L-homocysteine + H(+). The enzyme catalyses sarcosine + S-adenosyl-L-methionine = N,N-dimethylglycine + S-adenosyl-L-homocysteine + H(+). It functions in the pathway amine and polyamine biosynthesis; betaine biosynthesis via glycine pathway; betaine from glycine: step 1/3. Its pathway is amine and polyamine biosynthesis; betaine biosynthesis via glycine pathway; betaine from glycine: step 2/3. Its activity is regulated as follows. p-chloromercuribenzoic acid inhibits more than 95% of the GSMT activities on glycine and sarcosine, and S-adenosylhomocysteine (AdoHcy) inhibits completely GSMT activities. In terms of biological role, catalyzes the methylation of glycine and sarcosine to sarcosine and dimethylglycine, respectively, with S-adenosylmethionine (AdoMet) acting as the methyl donor. It has strict specificity for glycine and sarcosine as the methyl group acceptors. The protein is Glycine/sarcosine N-methyltransferase of Halorhodospira halochloris (Ectothiorhodospira halochloris).